The sequence spans 344 residues: Transcription factor HHO3 (344 aa).

Disordered stretches follow at residues 90–122 (KWSS…DKKK) and 156–212 (AFQP…KQRR). Over residues 97 to 106 (DETDKDEEAE) the composition is skewed to acidic residues. Over residues 178–188 (TPTSTTTTSST) the composition is skewed to low complexity. The region spanning 206–266 (SNRKQRRCWS…HLQKYRLHTR (61 aa)) is the HTH myb-type domain. Residues 237–262 (PKQIRDLMKVDGLTNDEVKSHLQKYR) constitute a DNA-binding region (H-T-H motif). Positions 306–344 (PVATQPPQSSTSGERSNRGCKSPATSSTTTHTPHLLPLS) are disordered. Residues 310–319 (QPPQSSTSGE) are compositionally biased toward polar residues. Positions 330–344 (TSSTTTHTPHLLPLS) are enriched in low complexity.

The protein resides in the nucleus. Its function is as follows. Probable transcription factor involved in phosphate signaling in roots. The polypeptide is Transcription factor HHO3 (Arabidopsis thaliana (Mouse-ear cress)).